The following is a 29-amino-acid chain: Brevinin-2Td (29 aa).

The cysteines at positions 23 and 29 are disulfide-linked.

The protein belongs to the frog skin active peptide (FSAP) family. Brevinin subfamily. In terms of tissue distribution, expressed by the skin glands.

Its subcellular location is the secreted. Functionally, antibacterial activity against representative Gram-negative and Gram-positive bacteria. The sequence is that of Brevinin-2Td from Rana temporaria (European common frog).